The sequence spans 647 residues: Frizzled-1 (647 aa).

The signal sequence occupies residues 1–69; the sequence is MAEEEAPKKS…WLLEAPLLLG (69 aa). At 73–322 the chain is on the extracellular side; the sequence is QAAGQGPGQG…PEELRFSRTW (250 aa). The tract at residues 74–104 is disordered; the sequence is AAGQGPGQGPGPGQQPPPPPQQQQSGQQYNG. The region spanning 111-230 is the FZ domain; that stretch reads PDHGYCQPIS…HGAGELCVGQ (120 aa). Cystine bridges form between Cys116-Cys177, Cys124-Cys170, Cys161-Cys198, Cys187-Cys227, and Cys191-Cys215. N-linked (GlcNAc...) asparagine glycosylation is present at Asn130. The N-linked (GlcNAc...) asparagine glycan is linked to Asn231. A helical membrane pass occupies residues 323–343; sequence IGIWSVLCCASTLFTVLTYLV. Residues 344 to 354 are Cytoplasmic-facing; it reads DMRRFSYPERP. The chain crosses the membrane as a helical span at residues 355–375; the sequence is IIFLSGCYTAVAVAYIAGFLL. Residues 376–402 lie on the Extracellular side of the membrane; that stretch reads EDRVVCNDKFAEDGARTVAQGTKKEGC. Residues 403–423 traverse the membrane as a helical segment; that stretch reads TILFMMLYFFSMASSIWWVIL. Over 424-445 the chain is Cytoplasmic; the sequence is SLTWFLAAGMKWGHEAIEANSQ. A helical transmembrane segment spans residues 446–466; it reads YFHLAAWAVPAIKTITILALG. Residues 467–489 are Extracellular-facing; it reads QVDGDVLSGVCFVGLNNVDALRG. Residues 490–510 form a helical membrane-spanning segment; sequence FVLAPLFVYLFIGTSFLLAGF. Topologically, residues 511–536 are cytoplasmic; the sequence is VSLFRIRTIMKHDGTKTEKLEKLMVR. The chain crosses the membrane as a helical span at residues 537 to 557; it reads IGVFSVLYTVPATIVIACYFY. Residues 558–601 lie on the Extracellular side of the membrane; sequence EQAFRDQWERSWVAQSCKSYAIPCPHLQAGGGAPPHPPMSPDFT. Residues 602-622 traverse the membrane as a helical segment; the sequence is VFMIKYLMTLIVGITSGFWIW. At 623–647 the chain is on the cytoplasmic side; the sequence is SGKTLNSWRKFYTRLTNSKQGETTV. The short motif at 625 to 630 is the Lys-Thr-X-X-X-Trp motif, mediates interaction with the PDZ domain of Dvl family members element; sequence KTLNSW. Residues 645–647 carry the PDZ-binding motif; the sequence is TTV.

It belongs to the G-protein coupled receptor Fz/Smo family. Interacts with MYOC. Interacts with WNT7B. As to quaternary structure, (Microbial infection) Interacts with C.difficile toxin TcdB; frizzled receptors constitute the major host receptors for TcdB in the colonic epithelium. Ubiquitinated by ZNRF3, leading to its degradation by the proteasome. In terms of tissue distribution, expressed in adult heart, placenta, lung, kidney, pancreas, prostate, and ovary and in fetal lung and kidney.

It localises to the cell membrane. Its function is as follows. Receptor for Wnt proteins. Activated by WNT3A, WNT3, WNT1 and to a lesser extent WNT2, but apparently not by WNT4, WNT5A, WNT5B, WNT6, WNT7A or WNT7B. Contradictory results showing activation by WNT7B have been described for mouse. Functions in the canonical Wnt/beta-catenin signaling pathway. The canonical Wnt/beta-catenin signaling pathway leads to the activation of disheveled proteins, inhibition of GSK-3 kinase, nuclear accumulation of beta-catenin and activation of Wnt target genes. A second signaling pathway involving PKC and calcium fluxes has been seen for some family members, but it is not yet clear if it represents a distinct pathway or if it can be integrated in the canonical pathway, as PKC seems to be required for Wnt-mediated inactivation of GSK-3 kinase. Both pathways seem to involve interactions with G-proteins. May be involved in transduction and intercellular transmission of polarity information during tissue morphogenesis and/or in differentiated tissues. Functionally, (Microbial infection) Acts as a receptor for C.difficile toxin TcdB in the colonic epithelium. This chain is Frizzled-1 (FZD1), found in Homo sapiens (Human).